Here is a 109-residue protein sequence, read N- to C-terminus: uncharacterized protein (109 aa).

The tract at residues 1–26 (MTPRSLPRYGNSSRRKSFPMHRPSNV) is disordered.

This is an uncharacterized protein from Mycobacterium bovis (strain ATCC BAA-935 / AF2122/97).